We begin with the raw amino-acid sequence, 302 residues long: Urease accessory protein UreD 2 (302 aa).

Belongs to the UreD family. In terms of assembly, ureD, UreF and UreG form a complex that acts as a GTP-hydrolysis-dependent molecular chaperone, activating the urease apoprotein by helping to assemble the nickel containing metallocenter of UreC. The UreE protein probably delivers the nickel.

It is found in the cytoplasm. Its function is as follows. Required for maturation of urease via the functional incorporation of the urease nickel metallocenter. The sequence is that of Urease accessory protein UreD 2 from Brucella melitensis biotype 1 (strain ATCC 23456 / CCUG 17765 / NCTC 10094 / 16M).